A 294-amino-acid polypeptide reads, in one-letter code: NAD kinase (294 aa).

Catalysis depends on D74, which acts as the Proton acceptor. Residues D74 to G75, N148 to E149, H159, R176, D178, T189 to S194, and Q249 contribute to the NAD(+) site.

This sequence belongs to the NAD kinase family. A divalent metal cation serves as cofactor.

It is found in the cytoplasm. The catalysed reaction is NAD(+) + ATP = ADP + NADP(+) + H(+). Involved in the regulation of the intracellular balance of NAD and NADP, and is a key enzyme in the biosynthesis of NADP. Catalyzes specifically the phosphorylation on 2'-hydroxyl of the adenosine moiety of NAD to yield NADP. The polypeptide is NAD kinase (Vibrio atlanticus (strain LGP32) (Vibrio splendidus (strain Mel32))).